Consider the following 229-residue polypeptide: 2-C-methyl-D-erythritol 4-phosphate cytidylyltransferase (229 aa).

It belongs to the IspD/TarI cytidylyltransferase family. IspD subfamily.

It catalyses the reaction 2-C-methyl-D-erythritol 4-phosphate + CTP + H(+) = 4-CDP-2-C-methyl-D-erythritol + diphosphate. It participates in isoprenoid biosynthesis; isopentenyl diphosphate biosynthesis via DXP pathway; isopentenyl diphosphate from 1-deoxy-D-xylulose 5-phosphate: step 2/6. Functionally, catalyzes the formation of 4-diphosphocytidyl-2-C-methyl-D-erythritol from CTP and 2-C-methyl-D-erythritol 4-phosphate (MEP). In Neisseria meningitidis serogroup C / serotype 2a (strain ATCC 700532 / DSM 15464 / FAM18), this protein is 2-C-methyl-D-erythritol 4-phosphate cytidylyltransferase.